Here is a 546-residue protein sequence, read N- to C-terminus: CTP synthase (546 aa).

The amidoligase domain stretch occupies residues 1–265 (MTKYIFVTGG…DDIIAEQLQL (265 aa)). Residue S13 coordinates CTP. UTP is bound at residue S13. ATP is bound by residues 14-19 (SLGKGI) and D71. Mg(2+) contacts are provided by D71 and E139. CTP is bound by residues 146-148 (DIE), 186-191 (KTKPTQ), and K222. Residues 186-191 (KTKPTQ) and K222 contribute to the UTP site. One can recognise a Glutamine amidotransferase type-1 domain in the interval 290-542 (KIAMVGKYVD…VKAALAHQAD (253 aa)). L-glutamine is bound at residue G351. C378 acts as the Nucleophile; for glutamine hydrolysis in catalysis. Residues 379–382 (LGMQ), E402, and R469 contribute to the L-glutamine site. Active-site residues include H515 and E517.

It belongs to the CTP synthase family. As to quaternary structure, homotetramer.

The enzyme catalyses UTP + L-glutamine + ATP + H2O = CTP + L-glutamate + ADP + phosphate + 2 H(+). It carries out the reaction L-glutamine + H2O = L-glutamate + NH4(+). The catalysed reaction is UTP + NH4(+) + ATP = CTP + ADP + phosphate + 2 H(+). Its pathway is pyrimidine metabolism; CTP biosynthesis via de novo pathway; CTP from UDP: step 2/2. With respect to regulation, allosterically activated by GTP, when glutamine is the substrate; GTP has no effect on the reaction when ammonia is the substrate. The allosteric effector GTP functions by stabilizing the protein conformation that binds the tetrahedral intermediate(s) formed during glutamine hydrolysis. Inhibited by the product CTP, via allosteric rather than competitive inhibition. In terms of biological role, catalyzes the ATP-dependent amination of UTP to CTP with either L-glutamine or ammonia as the source of nitrogen. Regulates intracellular CTP levels through interactions with the four ribonucleotide triphosphates. This Chromobacterium violaceum (strain ATCC 12472 / DSM 30191 / JCM 1249 / CCUG 213 / NBRC 12614 / NCIMB 9131 / NCTC 9757 / MK) protein is CTP synthase.